Reading from the N-terminus, the 331-residue chain is Pseudouridylate synthase TRUB2, mitochondrial (331 aa).

The N-terminal 10 residues, 1-10, are a transit peptide targeting the mitochondrion; that stretch reads MGSAGLSRLH. Asp98 acts as the Nucleophile in catalysis. Residues 296-331 are disordered; the sequence is KSLSPGLDTKQLPSPGWSWDSQGPSSTLGLERGAGQ. A compositionally biased stretch (polar residues) spans 314–323; the sequence is WDSQGPSSTL.

Belongs to the pseudouridine synthase TruB family. In terms of assembly, forms a regulatory protein-RNA complex, consisting of RCC1L, NGRN, RPUSD3, RPUSD4, TRUB2, FASTKD2 and 16S mt-rRNA.

The protein localises to the mitochondrion matrix. The enzyme catalyses a uridine in mRNA = a pseudouridine in mRNA. It catalyses the reaction uridine(55) in tRNA = pseudouridine(55) in tRNA. Minor enzyme contributing to the isomerization of uridine to pseudouridine (pseudouridylation) of specific mitochondrial mRNAs (mt-mRNAs) such as COXI and COXIII mt-mRNAs. As a component of a functional protein-RNA module, consisting of RCC1L, NGRN, RPUSD3, RPUSD4, TRUB2, FASTKD2 and 16S mitochondrial ribosomal RNA (16S mt-rRNA), controls 16S mt-rRNA abundance and is required for intra-mitochondrial translation. Also catalyzes pseudouridylation of some tRNAs, including synthesis of pseudouridine(55) from uracil-55, in the psi GC loop of a subset of tRNAs. This is Pseudouridylate synthase TRUB2, mitochondrial from Homo sapiens (Human).